The chain runs to 336 residues: MGKVLLELHSVPWNEEGLSDNARLYSFLEFVSPKIEELKYRKLLLEKLQTHIREVVLDAELQVYGSMYIGTTLSISDVDVSLKSPRVGELEKRRVTMVLRKYLDADADFHSSARVPRINLVDVSGIGVDLTFGNDKACRTAELQKAYNEEHPIFGRLLMLLKHWLFERDLENVHHGGIASCALSYMLIGWLEMRFHKKGIDSEVQPIRALLQKFFYFWGVEWTYELFVLRPLTGQIVPKLQKGWLNEVQPNLLSIEDPIDRNNDIGKQSFQISMIKAAFVASANELLSDKTWFSTFAITEDEMFLCKQFENVINTKRSLVEGYDSDTESDELQAGG.

Residues Asp77 and Asp79 each coordinate Mg(2+). Positions 209–263 (ALLQKFFYFWGVEWTYELFVLRPLTGQIVPKLQKGWLNEVQPNLLSIEDPIDRNN) constitute a PAP-associated domain. A Phosphoserine modification is found at Ser325. Thr327 is modified (phosphothreonine). Ser329 is modified (phosphoserine).

The protein belongs to the DNA polymerase type-B-like family. In terms of assembly, cid12, hrr1 and rdp1 interact forming the RNA-directed RNA polymerase complex (RDRC). The RDRC complex interacts with the RITS complex via interaction between ago1 and hrr1. Clr4 has a role in mediating this interaction. Requires Mg(2+) as cofactor. It depends on Mn(2+) as a cofactor.

The protein localises to the cytoplasm. Its subcellular location is the nucleus. It carries out the reaction RNA(n) + ATP = RNA(n)-3'-adenine ribonucleotide + diphosphate. Its function is as follows. Has a role in the RNA interference (RNAi) pathway which is important for heterochromatin formation and accurate chromosome segregation. A member of the RNA-directed RNA polymerase complex (RDRC) which is involved in the generation of small interfering RNAs (siRNAs) and mediate their association with the RNA-induced transcriptional silencing (RITS) complex. RITS acts as a priming complex for dsRNA synthesis at the site of non-coding centromeric RNA. This is Poly(A) RNA polymerase cid12 (cid12) from Schizosaccharomyces pombe (strain 972 / ATCC 24843) (Fission yeast).